Here is a 1063-residue protein sequence, read N- to C-terminus: Structural polyprotein (1063 aa).

The tract at residues 23-131 (LRAELAAGAS…LGPPTNPFQA (109 aa)) is disordered. The interval 30–69 (GASQLRRPRPPRQRDSSTSGDDSGRDSGGPRRRRGNRGRG) is human C1QBP/SF2P32-binding. Serine 46 is modified (phosphoserine; by host). The segment covering 59–69 (PRRRRGNRGRG) has biased composition (basic residues). The segment covering 70 to 87 (QRKDWSKAPPPPEERQES) has biased composition (basic and acidic residues). The segment covering 93-107 (APKPPRAPPQPPQPP) has biased composition (pro residues). Cysteine 153 and cysteine 197 are disulfide-bonded. Positions 279–300 (GAPQVFLAGLLLAAVAVGTARA) are functions as E2 signal peptide. Residues 301 to 534 (GLQPRTDIAA…LWLATANALS (234 aa)) are Extracellular-facing. The segment at 305–327 (RTDIAAPPAPPQAPRAHGKHYGH) is disordered. 4 N-linked (GlcNAc...) asparagine; by host glycosylation sites follow: asparagine 353, asparagine 371, asparagine 410, and asparagine 429. Residues 535–555 (LDHALAAVVLLVPWVLIFMLC) traverse the membrane as a helical segment. At 556-582 (RRACRRRGAAAALTAVVLQGYNPPAYG) the chain is on the cytoplasmic side. The functions as E1 signal peptide stretch occupies residues 563–582 (GAAAALTAVVLQGYNPPAYG). Topologically, residues 583–1028 (EEAFTYLCTA…QTWAEWAAAH (446 aa)) are extracellular. Disulfide bonds link cysteine 590–cysteine 595, cysteine 619–cysteine 824, cysteine 641–cysteine 653, cysteine 699–cysteine 712, cysteine 758–cysteine 767, cysteine 807–cysteine 817, cysteine 931–cysteine 934, and cysteine 950–cysteine 983. Residue asparagine 658 is glycosylated (N-linked (GlcNAc...) asparagine; by host). Residues asparagine 670 and alanine 671 each coordinate Ca(2+). Ca(2+) contacts are provided by aspartate 718 and threonine 719. 2 N-linked (GlcNAc...) asparagine; by host glycosylation sites follow: asparagine 759 and asparagine 791. O-linked (GalNAc...) threonine; by host glycosylation is found at threonine 1011 and threonine 1012. The helical transmembrane segment at 1029-1049 (WWQLTLGAICALLLAGLLACC) threads the bilayer. At 1050–1063 (AKCLYYLRGAIAPR) the chain is on the extracellular side.

In terms of assembly, homodimer; further assembles into homooligomer. Interacts with human C1QBP. Interacts (via N-terminus) with protease/methyltransferase p150. As to quaternary structure, heterodimer with spike glycoprotein E2. Heterodimer with spike glycoprotein E1. Structural polyprotein: Specific enzymatic cleavages in vivo yield mature proteins. Two signal peptidase-mediated cleavages within the polyprotein produce the structural proteins capsid, E2, and E1. The E2 signal peptide remains attached to the C-terminus of the capsid protein after cleavage by the signal peptidase. Another signal peptide at E2 C-terminus directs E1 to the ER, with a similar mechanism. In terms of processing, contains three N-linked oligosaccharides. Post-translationally, capsid is phosphorylated on Ser-46 by host. This phosphorylation negatively regulates capsid protein RNA-binding activity. Dephosphorylated by human PP1A.

It is found in the virion. It localises to the host cytoplasm. The protein resides in the host mitochondrion. The protein localises to the virion membrane. Its subcellular location is the host Golgi apparatus membrane. In terms of biological role, capsid protein interacts with genomic RNA and assembles into icosahedric core particles 65-70 nm in diameter. The resulting nucleocapsid eventually associates with the cytoplasmic domain of E2 at the cell membrane, leading to budding and formation of mature virions from host Golgi membranes. Phosphorylation negatively regulates RNA-binding activity, possibly delaying virion assembly during the viral replication phase. Capsid protein dimerizes and becomes disulfide-linked in the virion. Modulates genomic RNA replication. Modulates subgenomic RNA synthesis by interacting with human C1QBP/SF2P32. Induces both perinuclear clustering of mitochondria and the formation of electron-dense intermitochondrial plaques, both hallmarks of rubella virus infected cells. Induces apoptosis when expressed in transfected cells. Functionally, responsible for viral attachment to target host cell, by binding to the cell receptor. Its transport to the plasma membrane depends on interaction with E1 protein. The surface glycoproteins display an irregular helical organization and a pseudo-tetrameric inner nucleocapsid arrangement. Its function is as follows. Class II viral fusion protein. Fusion activity is inactive as long as E1 is bound to E2 in mature virion. After virus attachment to target cell and clathrin-mediated endocytosis, acidification of the endosome would induce dissociation of E1/E2 heterodimer and concomitant trimerization of the E1 subunits. This E1 homotrimer is fusion active, and promotes release of viral nucleocapsid in cytoplasm after endosome and viral membrane fusion. The cytoplasmic tail of spike glycoprotein E1 modulates virus release. The surface glycoproteins display an irregular helical organization and a pseudo-tetrameric inner nucleocapsid arrangement. The sequence is that of Structural polyprotein from Rubella virus (strain BRD1) (RUBV).